A 248-amino-acid polypeptide reads, in one-letter code: Putative mutator protein MutT4 (248 aa).

Residues 1 to 64 (MSDGEQAKSR…GSTRMRTVHE (64 aa)) form a disordered region. Basic residues predominate over residues 9–20 (SRRRRGRRRGRR). Low complexity predominate over residues 31-44 (AQPAGDATPTPATA). Residues 45-57 (KRSRSRSPRRGST) show a composition bias toward basic residues. Residues 62-198 (VHETSAGGLV…DERRLAEVAD (137 aa)) enclose the Nudix hydrolase domain. 4 residues coordinate Mg(2+): Gly103, Glu118, Glu121, and Glu122. A Nudix box motif is present at residues 103-124 (GHIELGETAEQTAIREVAEETG). A disordered region spans residues 204-248 (LQSDGPAALPPLPPSSPRRRPQTHSRARHADDSAPGQHNGPGPGP). Residues 220 to 230 (PRRRPQTHSRA) are compositionally biased toward basic residues.

It belongs to the Nudix hydrolase family. It depends on Mg(2+) as a cofactor. Mn(2+) serves as cofactor.

Its function is as follows. May be involved in the GO system responsible for removing an oxidatively damaged form of guanine (7,8-dihydro-8-oxoguanine, 8-oxo-dGTP) from DNA and the nucleotide pool. This chain is Putative mutator protein MutT4 (mutT4), found in Mycobacterium tuberculosis (strain CDC 1551 / Oshkosh).